The following is a 129-amino-acid chain: Small ribosomal subunit protein uS11 (129 aa).

Belongs to the universal ribosomal protein uS11 family. As to quaternary structure, part of the 30S ribosomal subunit. Interacts with proteins S7 and S18. Binds to IF-3.

Located on the platform of the 30S subunit, it bridges several disparate RNA helices of the 16S rRNA. Forms part of the Shine-Dalgarno cleft in the 70S ribosome. The polypeptide is Small ribosomal subunit protein uS11 (Geobacillus thermodenitrificans (strain NG80-2)).